The chain runs to 411 residues: Transforming growth factor beta regulator 1 (411 aa).

Disordered regions lie at residues 1–29 (MSLLDGLASSPRAPLQSSKARMKKLPKKS) and 119–146 (GPISGPSTGAEEPFGKKTKKEKKEKGKE). Position 2 is an N-acetylserine (S2). At S10 the chain carries Phosphoserine. The FYR N-terminal domain maps to 182 to 241 (VFPIGLGGLTVYSLGEIITDRPGFHDESAIYPVGYCSTRIYASMKCPDQKCLYTCQIKDG). Residues 242–321 (GVQPQFEIVP…RKCINYQWVK (80 aa)) enclose the FYR C-terminal domain.

Belongs to the TBRG1 family. In terms of assembly, interacts with CDKN2A and MDM2. In terms of processing, ubiquitinated; mediated by MDM2 and leading to its subsequent proteasomal degradation. As to expression, widely expressed at low levels in most tissues, with highest levels in pancreas, lung and liver. Expression is decreased in primary tumors including lung, liver, breast, pancreas and kidney carcinomas, chronic lymphocytic leukemia and diffuse large B-cell lymphoma.

The protein localises to the nucleus. Its function is as follows. Acts as a growth inhibitor. Can activate p53/TP53, causes G1 arrest and collaborates with CDKN2A to restrict proliferation, but does not require either protein to inhibit DNA synthesis. Redistributes CDKN2A into the nucleoplasm. Involved in maintaining chromosomal stability. The polypeptide is Transforming growth factor beta regulator 1 (TBRG1) (Homo sapiens (Human)).